Consider the following 257-residue polypeptide: Zinc import ATP-binding protein ZnuC (257 aa).

The ABC transporter domain maps to 6-221 (IRLEQVGVSF…PAFVELFGQN (216 aa)). 38-45 (GPNGAGKT) is a binding site for ATP.

Belongs to the ABC transporter superfamily. Zinc importer (TC 3.A.1.15.5) family. As to quaternary structure, the complex is composed of two ATP-binding proteins (ZnuC), two transmembrane proteins (ZnuB) and a solute-binding protein (ZnuA).

The protein resides in the cell inner membrane. It carries out the reaction Zn(2+)(out) + ATP(in) + H2O(in) = Zn(2+)(in) + ADP(in) + phosphate(in) + H(+)(in). Part of the ABC transporter complex ZnuABC involved in zinc import. Responsible for energy coupling to the transport system. This Pseudomonas entomophila (strain L48) protein is Zinc import ATP-binding protein ZnuC.